The primary structure comprises 446 residues: Probable D-serine dehydratase (446 aa).

Residue Lys116 is modified to N6-(pyridoxal phosphate)lysine.

Belongs to the serine/threonine dehydratase family. DsdA subfamily. Pyridoxal 5'-phosphate serves as cofactor.

The enzyme catalyses D-serine = pyruvate + NH4(+). The protein is Probable D-serine dehydratase of Bacillus cereus (strain 03BB102).